The sequence spans 548 residues: Uridine-cytidine kinase-like 1 (548 aa).

A compositionally biased stretch (low complexity) spans Met-1–Ala-18. Positions Met-1–Thr-74 are disordered. Phosphoserine occurs at positions 56 and 63. Gly-105–Thr-112 contributes to the ATP binding site. Ser-539 is modified (phosphoserine).

Belongs to the uridine kinase family. Interacts with RNF19B. Post-translationally, ubiquitinated by RNF19B; which induces proteasomal degradation.

The protein localises to the cytoplasm. The protein resides in the nucleus. It catalyses the reaction uridine + ATP = UMP + ADP + H(+). The catalysed reaction is cytidine + ATP = CMP + ADP + H(+). Its pathway is pyrimidine metabolism; UMP biosynthesis via salvage pathway; UMP from uridine: step 1/1. Its function is as follows. May contribute to UTP accumulation needed for blast transformation and proliferation. The protein is Uridine-cytidine kinase-like 1 (Uckl1) of Mus musculus (Mouse).